The following is a 157-amino-acid chain: Ribosome maturation factor RimP (157 aa).

It belongs to the RimP family.

Its subcellular location is the cytoplasm. Required for maturation of 30S ribosomal subunits. This is Ribosome maturation factor RimP from Streptococcus thermophilus (strain ATCC BAA-491 / LMD-9).